Consider the following 284-residue polypeptide: Tropomyosin (284 aa).

The segment at Met1 to Gln47 is disordered. Positions Met1–Tyr284 form a coiled coil. Residues Lys12 to Lys38 show a composition bias toward basic and acidic residues.

The protein belongs to the tropomyosin family. Homodimer.

Its function is as follows. Tropomyosin, in association with the troponin complex, plays a central role in the calcium dependent regulation of muscle contraction. The chain is Tropomyosin from Trichinella pseudospiralis (Parasitic roundworm).